A 328-amino-acid chain; its full sequence is Type II secretion system protein K (328 aa).

A propeptide spans 1-7 (MRSRQRG) (leader sequence). Residues 8-28 (AALLVVLLILALMVTIAAVIT) traverse the membrane as a helical segment. Residues 29-328 (ERTGKAFLRT…QYGGYRTVNP (300 aa)) lie on the Periplasmic side of the membrane.

This sequence belongs to the GSP K family. Type II secretion is composed of four main components: the outer membrane complex, the inner membrane complex, the cytoplasmic secretion ATPase and the periplasm-spanning pseudopilus. Interacts with core component OutG. In terms of processing, cleaved by prepilin peptidase.

It localises to the cell inner membrane. In terms of biological role, component of the type II secretion system required for the energy-dependent secretion of extracellular factors such as proteases and toxins from the periplasm. Plays a role in pseudopilus assembly and seems to control its length. Interacts with the pseudopilus tip complex that is critical for the recognition and binding of secretion substrates. The protein is Type II secretion system protein K (outK) of Pectobacterium carotovorum subsp. carotovorum (Erwinia carotovora subsp. carotovora).